Consider the following 773-residue polypeptide: Carnitine O-palmitoyltransferase 1, liver isoform (773 aa).

Residue alanine 2 is modified to N-acetylalanine. The Cytoplasmic segment spans residues 2-47; the sequence is AEAHQAVAFQFTVTPDGIDLRLSHEALKQICLSGLHSWKKKFIRFK. The helical transmembrane segment at 48-73 threads the bilayer; sequence NGIITGVFPANPSSWLIVVVGVISSM. Over 74–102 the chain is Mitochondrial intermembrane; that stretch reads HAKVDPSLGMIAKISRTLDTTGRMSSQTK. Residues 103-122 form a helical membrane-spanning segment; sequence NIVSGVLFGTGLWVAVIMTM. The Cytoplasmic segment spans residues 123-773; that stretch reads RYSLKVLLSY…LFGLTINSKK (651 aa). Tyrosine 282 is subject to 3'-nitrotyrosine. Catalysis depends on histidine 473, which acts as the Proton acceptor. 555–567 is a CoA binding site; that stretch reads GKGLIKKCRTSPD. Threonine 588 is subject to Phosphothreonine. A 3'-nitrotyrosine modification is found at tyrosine 589. (R)-carnitine contacts are provided by tyrosine 589 and threonine 602. Threonine 604 carries the post-translational modification Phosphothreonine. Residues serine 741 and serine 747 each carry the phosphoserine modification.

It belongs to the carnitine/choline acetyltransferase family. In terms of assembly, homohexamer and homotrimer. Identified in a complex that contains at least CPT1A, ACSL1 and VDAC1. Also identified in complexes with ACSL1 and VDAC2 and VDAC3. Interacts with ZDHHC4. In terms of tissue distribution, liver and kidney.

It localises to the mitochondrion outer membrane. It carries out the reaction (R)-carnitine + hexadecanoyl-CoA = O-hexadecanoyl-(R)-carnitine + CoA. The catalysed reaction is succinyl-CoA + L-lysyl-[protein] = N(6)-succinyl-L-lysyl-[protein] + CoA + H(+). It functions in the pathway lipid metabolism; fatty acid beta-oxidation. Inhibited by malonyl-CoA. Functionally, catalyzes the transfer of the acyl group of long-chain fatty acid-CoA conjugates onto carnitine, an essential step for the mitochondrial uptake of long-chain fatty acids and their subsequent beta-oxidation in the mitochondrion. Also possesses a lysine succinyltransferase activity that can regulate enzymatic activity of substrate proteins such as ENO1 and metabolism independent of its classical carnitine O-palmitoyltransferase activity. Plays an important role in hepatic triglyceride metabolism. Also plays a role in inducible regulatory T-cell (iTreg) differentiation once activated by butyryl-CoA that antagonizes malonyl-CoA-mediated CPT1A repression. Sustains the IFN-I response by recruiting ZDHCC4 to palmitoylate MAVS at the mitochondria leading to MAVS stabilization and activation. The chain is Carnitine O-palmitoyltransferase 1, liver isoform (Cpt1a) from Rattus norvegicus (Rat).